The following is a 451-amino-acid chain: MKTRSEIENRMQDIEYALLGKALIFEDSTEYILRQLANYEFKCSHHKNIFIVFKYLKDNGLPITVDSAWEELLRRRIKDMDKSYLGLMLHDALSNDKLRSVSHTVFLDDLSVCSAEENLSNFIFRSFNEYNENPLRRSPFLLLERIKGRLDSAIAKTFSIRSARGRSIYDIFSQSEIGVLARIKKRRATFSENQNSFFDAFPTGYKDIDDKGVILAKGNFVIIAARPSIGKTALAIDMAINLAVTQQRRVGFLSLEMSAGQIVERIIANLTGISGEKLQRGDLSKEELFRVEEAGETVRESHFYICSDSQYKLNLIANQIRLLRKEDRVDVIFIDYLQLINSSVGENRQNEIADISRTLRGLASELNIPIVCLSQLSRKVEDRANKVPMLSDLRDSGQIEQDADVILFINRKESSSNCEITVGKNRHGSVFSSVLHFDPKISKFSAIKKVW.

Positions 194–451 constitute an SF4 helicase domain; that stretch reads QNSFFDAFPT…SKFSAIKKVW (258 aa). 225–232 serves as a coordination point for ATP; it reads ARPSIGKT.

The protein belongs to the helicase family. DnaB subfamily. As to quaternary structure, homohexamer.

The enzyme catalyses Couples ATP hydrolysis with the unwinding of duplex DNA at the replication fork by translocating in the 5'-3' direction. This creates two antiparallel DNA single strands (ssDNA). The leading ssDNA polymer is the template for DNA polymerase III holoenzyme which synthesizes a continuous strand.. It carries out the reaction ATP + H2O = ADP + phosphate + H(+). Its function is as follows. A replicative DNA helicase, it participates in initiation and elongation during DNA replication. Travels ahead of the DNA replisome, separating dsDNA into templates for DNA synthesis. A processive ATP-dependent 5'-3' DNA helicase it has DNA-dependent ATPase activity. The plasmid this protein is encoded on is thought to be required for growth within mammalian cells. This Chlamydia trachomatis serovar L2 (strain ATCC VR-902B / DSM 19102 / 434/Bu) protein is Probable plasmid replicative DNA helicase.